The primary structure comprises 172 residues: S-ribosylhomocysteine lyase (172 aa).

Fe cation is bound by residues histidine 54, histidine 58, and cysteine 128.

Belongs to the LuxS family. As to quaternary structure, homodimer. Requires Fe cation as cofactor.

It catalyses the reaction S-(5-deoxy-D-ribos-5-yl)-L-homocysteine = (S)-4,5-dihydroxypentane-2,3-dione + L-homocysteine. Its function is as follows. Involved in the synthesis of autoinducer 2 (AI-2) which is secreted by bacteria and is used to communicate both the cell density and the metabolic potential of the environment. The regulation of gene expression in response to changes in cell density is called quorum sensing. Catalyzes the transformation of S-ribosylhomocysteine (RHC) to homocysteine (HC) and 4,5-dihydroxy-2,3-pentadione (DPD). The protein is S-ribosylhomocysteine lyase of Aliivibrio salmonicida (strain LFI1238) (Vibrio salmonicida (strain LFI1238)).